The following is a 202-amino-acid chain: LexA repressor (202 aa).

A DNA-binding region (H-T-H motif) is located at residues 29 to 49 (VREICEATGLKSTSTVHGHLT). Active-site for autocatalytic cleavage activity residues include Ser126 and Lys163.

Belongs to the peptidase S24 family. In terms of assembly, homodimer.

It carries out the reaction Hydrolysis of Ala-|-Gly bond in repressor LexA.. Its function is as follows. Represses a number of genes involved in the response to DNA damage (SOS response), including recA and lexA. In the presence of single-stranded DNA, RecA interacts with LexA causing an autocatalytic cleavage which disrupts the DNA-binding part of LexA, leading to derepression of the SOS regulon and eventually DNA repair. The sequence is that of LexA repressor from Caldicellulosiruptor saccharolyticus (strain ATCC 43494 / DSM 8903 / Tp8T 6331).